A 205-amino-acid chain; its full sequence is Isochorismatase domain-containing protein 2 (205 aa).

Phosphoserine is present on residues Ser-7 and Ser-202.

It belongs to the isochorismatase family. As to quaternary structure, interacts with CDKN2A.

The protein localises to the cytoplasm. Its subcellular location is the nucleus. This Pongo abelii (Sumatran orangutan) protein is Isochorismatase domain-containing protein 2 (ISOC2).